Consider the following 265-residue polypeptide: Short-chain dehydrogenase/reductase phqE (265 aa).

Residues Thr23, Ser24, Ile26, Ser46, Asn47, Lys50, Asp76, Arg131, Val203, and Thr205 each coordinate NADP(+). Residues 25–45 (GIGFAVCAAALGHGAIVTIVG) form a helical membrane-spanning segment.

The protein belongs to the short-chain dehydrogenases/reductases (SDR) family. The cofactor is NADP(+).

The protein localises to the membrane. The protein operates within alkaloid biosynthesis. Its function is as follows. Short-chain dehydrogenase/reductase; part of the gene cluster that mediates the biosynthesis of paraherquamide, a fungal indole alkaloid that belongs to a family of natural products containing a characteristic bicyclo[2.2.2]diazaoctane core. The first steps in the biosynthesis of paraherquamide is the production of the beta-methyl-proline precursor from L-isoleucine. They require oxidation of a terminally hydroxylated L-isoleucine to the corresponding aldehyde by enzymes which have still to be identified. Spontaneous cyclization and dehydration would yield the 4-methyl pyrolline-5-carboxylic acid, which is then reduced by the pyrroline-5-carboxylate reductase phqD leading to the beta-methyl-proline precursor. The next step of paraherquamide biosynthesis involves coupling of beta-methyl-proline and L-tryptophan by the bimodular NRPS phqB, to produce a monooxopiperazine intermediate. The reductase (R) domain of phqB utilizes NADPH for hydride transfer to reduce the thioester bond of the T domain-tethered linear dipeptide to a hemithioaminal intermediate, which spontaneously cleaves the C-S bond to release the aldehyde product. This compound undergoes spontaneous cyclization and dehydration to give a dienamine which is reverse prenylated at C-2 by the reverse prenyltransferase phqJ. The other prenyltransferase present in the cluster, phqI may be a redundant gene in the pathway. During biosynthetic assembly, the key step to produce the polycyclic core is catalyzed by the bifunctional reductase and intramolecular [4+2] Diels-Alderase, phqE, resulting in formation of the [2.2.2] diazaoctane intermediate preparaherquamide. Following formation of preparaherquamide, an indole 2,3-epoxidation-initiated pinacol-like rearrangement is catalyzed by the phqK FAD-dependent monooxygenase. The prenyltransferase phqA, the cytochrome P450 monooxygenase phqL, and the FAD-linked oxidoreductase phqH (or the cytochrome P450 monooxygenase phqM), are proposed to be involved in the formation of the pyran ring. The FAD-dependent monooxygenase phqK is likely responsible for generation of the spiro-oxindole, and the N-methylation is likely mediated by the phqN methyltransferase leading to the isolable natural product paraherquamide F. However, the order of these biosynthetic steps has still to be determined. In late-stage paraherquamide biosynthesis, the third P450 monooxygenase, phqO, is probably responsible for the C-14 hydroxylation, transforming paraherquamide F to paraherquamide G, and paraherquamide E to the final product paraherquamide A. The expansion from the 6-membered ring pyran (in paraherquamides F and G) to the 7-membered dioxepin ring (in paraherquamides A and E) represents a poorly understood but intriguing process that probably involves the 2-oxoglutarate-dependent dioxygenase phqC. Finally, the remaining members of the paraherquamide cluster, including phqI as well as phqM (or phqH), do not have a clearly prescribed role and appear to be redundant. This chain is Short-chain dehydrogenase/reductase phqE, found in Penicillium fellutanum.